We begin with the raw amino-acid sequence, 420 residues long: Putative kinase Y4mE (420 aa).

The Proton acceptor role is filled by D302.

It belongs to the HipA Ser/Thr kinase family.

In Sinorhizobium fredii (strain NBRC 101917 / NGR234), this protein is Putative kinase Y4mE.